The primary structure comprises 417 residues: Serine hydroxymethyltransferase (417 aa).

(6S)-5,6,7,8-tetrahydrofolate contacts are provided by residues L122 and 126-128; that span reads GHL. Position 230 is an N6-(pyridoxal phosphate)lysine (K230). 355-357 is a binding site for (6S)-5,6,7,8-tetrahydrofolate; it reads SPF.

Belongs to the SHMT family. Homodimer. It depends on pyridoxal 5'-phosphate as a cofactor.

It is found in the cytoplasm. It catalyses the reaction (6R)-5,10-methylene-5,6,7,8-tetrahydrofolate + glycine + H2O = (6S)-5,6,7,8-tetrahydrofolate + L-serine. The protein operates within one-carbon metabolism; tetrahydrofolate interconversion. It participates in amino-acid biosynthesis; glycine biosynthesis; glycine from L-serine: step 1/1. Its function is as follows. Catalyzes the reversible interconversion of serine and glycine with tetrahydrofolate (THF) serving as the one-carbon carrier. This reaction serves as the major source of one-carbon groups required for the biosynthesis of purines, thymidylate, methionine, and other important biomolecules. Also exhibits THF-independent aldolase activity toward beta-hydroxyamino acids, producing glycine and aldehydes, via a retro-aldol mechanism. The polypeptide is Serine hydroxymethyltransferase (Francisella tularensis subsp. mediasiatica (strain FSC147)).